The sequence spans 425 residues: Dihydroorotase (425 aa).

Residues His58 and His60 each coordinate Zn(2+). Substrate is bound by residues His60 to Arg62 and Asn92. The Zn(2+) site is built by Asp150, His177, and His230. Asn276 is a binding site for substrate. Asp303 is a binding site for Zn(2+). The active site involves Asp303. Substrate is bound by residues His307 and Phe321–Gly322.

It belongs to the metallo-dependent hydrolases superfamily. DHOase family. Class I DHOase subfamily. It depends on Zn(2+) as a cofactor.

It carries out the reaction (S)-dihydroorotate + H2O = N-carbamoyl-L-aspartate + H(+). The protein operates within pyrimidine metabolism; UMP biosynthesis via de novo pathway; (S)-dihydroorotate from bicarbonate: step 3/3. Catalyzes the reversible cyclization of carbamoyl aspartate to dihydroorotate. The protein is Dihydroorotase of Pediococcus pentosaceus (strain ATCC 25745 / CCUG 21536 / LMG 10740 / 183-1w).